The following is a 725-amino-acid chain: Non-structural protein 4 (725 aa).

Disordered regions lie at residues 1–26 (MSKG…GNRN) and 666–725 (DEVE…TKDE). The segment covering 7-16 (TVTSLVSGPP) has biased composition (polar residues). The segment covering 675 to 686 (ENQKQELDAKSD) has biased composition (basic and acidic residues). Positions 687–709 (DVEESSVEGEEDDDGSSASEETD) are enriched in acidic residues.

The polypeptide is Non-structural protein 4 (Rice gall dwarf virus (RGDV)).